The following is a 1148-amino-acid chain: Zinc finger CCCH domain-containing protein 18 (1148 aa).

A compositionally biased stretch (low complexity) spans 1-13 (MDTPESPTQSPQS). 3 disordered regions span residues 1-315 (MDTP…PMDR), 380-417 (DPFS…LPPP), and 521-1127 (YTET…REEL). Basic and acidic residues-rich tracts occupy residues 53–73 (VPEH…AGRE) and 82–96 (EDYK…DIHQ). 2 stretches are compositionally biased toward acidic residues: residues 144 to 156 (ERGD…EEDE) and 167 to 176 (ELEEEEDEEE). Residues 190–202 (DLKDESSVSRDLD) show a composition bias toward basic and acidic residues. Acidic residues-rich tracts occupy residues 203–214 (EHELDYDEEVPE) and 233–245 (EDGE…DEEE). The span at 261–289 (DNRDTPLRKSEDSREGGRRDSFRDKKKEE) shows a compositional bias: basic and acidic residues. Positions 290 to 306 (DDGEIDEGEIDDDDLEE) are enriched in acidic residues. Residues 388 to 397 (PPGGAAGGGP) are compositionally biased toward gly residues. The span at 530–615 (PDRERERDPR…EKKDEKEKTL (86 aa)) shows a compositional bias: basic and acidic residues. Residues 543 to 584 (RERERERERDHRERERRQREREREREREREKDSRRRKDEWDR) adopt a coiled-coil conformation. Pro residues predominate over residues 622–631 (NMPPRGPMEP). Over residues 632 to 646 (PTKKDMLSVTKRPDE) the composition is skewed to basic and acidic residues. Position 666 is a phosphoserine (serine 666). The segment covering 677–740 (SGSSVSLSNS…SRSGSFSSSP (64 aa)) has biased composition (low complexity). Pro residues-rich tracts occupy residues 783 to 800 (KVMP…PPKP) and 807 to 817 (PPNPRPPGRPP). The span at 818 to 833 (GPREPREPPNMREGRK) shows a compositional bias: basic and acidic residues. 3 stretches are compositionally biased toward low complexity: residues 847–875 (VSGS…ASRS), 882–903 (SLSV…SVRS), and 914–925 (ASPVSSASSRSP). 2 stretches are compositionally biased toward basic and acidic residues: residues 933–964 (DRGP…KRVD) and 1012–1029 (QTDR…KERP). Phosphoserine is present on serine 1056. Low complexity-rich tracts occupy residues 1083 to 1098 (PAKS…SAAK) and 1107 to 1119 (GSAS…KPSS). The stretch at 1118-1146 (SSTLSRREELLKQLKAVEDAIARKRAKIP) forms a coiled coil.

Its subcellular location is the nucleus. The protein is Zinc finger CCCH domain-containing protein 18 (zc3h18) of Danio rerio (Zebrafish).